The following is a 706-amino-acid chain: Elongation factor G (706 aa).

The tr-type G domain occupies 15–291 (LKTRNIGISA…GVLDYLASPV (277 aa)). GTP contacts are provided by residues 24–31 (AHIDSGKT), 91–95 (DTPGH), and 145–148 (NKLD).

It belongs to the TRAFAC class translation factor GTPase superfamily. Classic translation factor GTPase family. EF-G/EF-2 subfamily.

It localises to the cytoplasm. Catalyzes the GTP-dependent ribosomal translocation step during translation elongation. During this step, the ribosome changes from the pre-translocational (PRE) to the post-translocational (POST) state as the newly formed A-site-bound peptidyl-tRNA and P-site-bound deacylated tRNA move to the P and E sites, respectively. Catalyzes the coordinated movement of the two tRNA molecules, the mRNA and conformational changes in the ribosome. The polypeptide is Elongation factor G (Leptospira borgpetersenii serovar Hardjo-bovis (strain JB197)).